A 116-amino-acid polypeptide reads, in one-letter code: Methionine-R-sulfoxide reductase B1 (116 aa).

In terms of domain architecture, MsrB spans 1–106 (MSFCSFFGGE…FSSSLKFVPK (106 aa)). Residues Cys23, Cys26, Cys71, and Cys74 each coordinate Zn(2+). Sec95 acts as the Nucleophile in catalysis. Position 95 (Sec95) is a non-standard amino acid, selenocysteine.

It belongs to the MsrB Met sulfoxide reductase family. Zn(2+) serves as cofactor. Post-translationally, truncated MSRB1/SEPX1 proteins produced by failed UGA/Sec decoding are ubiquitinated by some Cul2-RING E3 ubiquitin-protein ligase complexes (containing either PRAME, PRAMF6, PRAMF9 or FEM1C as substrate-recognition component).

Its subcellular location is the cytoplasm. It is found in the nucleus. The protein localises to the cytoskeleton. It catalyses the reaction L-methionyl-[protein] + [thioredoxin]-disulfide + H2O = L-methionyl-(R)-S-oxide-[protein] + [thioredoxin]-dithiol. The catalysed reaction is [thioredoxin]-disulfide + L-methionine + H2O = L-methionine (R)-S-oxide + [thioredoxin]-dithiol. Methionine-sulfoxide reductase that specifically reduces methionine (R)-sulfoxide back to methionine. While in many cases, methionine oxidation is the result of random oxidation following oxidative stress, methionine oxidation is also a post-translational modification that takes place on specific residue. Acts as a regulator of actin assembly by reducing methionine (R)-sulfoxide mediated by MICALs (MICAL1, MICAL2 or MICAL3) on actin, thereby promoting filament repolymerization. Plays a role in innate immunity by reducing oxidized actin, leading to actin repolymerization in macrophages. In Homo sapiens (Human), this protein is Methionine-R-sulfoxide reductase B1 (MSRB1).